A 281-amino-acid chain; its full sequence is sn-glycerol-3-phosphate transport system permease protein UgpE (281 aa).

A run of 6 helical transmembrane segments spans residues 16 to 36 (LILGIAVILFPLYVAFVAATL), 85 to 105 (FSITLGKITVSMLSAFAIVWF), 113 to 133 (FFWMIFITLMLPVEVRIFPTV), 142 to 162 (LDSYAGLTLPLMASATATFLF), 202 to 222 (ALFVITFIYGWNQYLWPLLII), and 247 to 267 (WNSVMAAMLLTLIPPVVIVLV). The ABC transmembrane type-1 domain occupies 77-268 (LLNSFVMAFS…IPPVVIVLVM (192 aa)).

This sequence belongs to the binding-protein-dependent transport system permease family. UgpAE subfamily. In terms of assembly, the complex is composed of two ATP-binding proteins (UgpC), two transmembrane proteins (UgpA and UgpE) and a solute-binding protein (UgpB).

Its subcellular location is the cell inner membrane. Part of the ABC transporter complex UgpBAEC involved in sn-glycerol-3-phosphate (G3P) import. Probably responsible for the translocation of the substrate across the membrane. This chain is sn-glycerol-3-phosphate transport system permease protein UgpE (ugpE), found in Shigella dysenteriae serotype 1 (strain Sd197).